A 277-amino-acid chain; its full sequence is Undecaprenyl-diphosphatase (277 aa).

7 consecutive transmembrane segments (helical) span residues 1-21 (MTWI…FLPI), 41-61 (GAAF…IYFW), 90-110 (WLII…EDWI), 114-134 (FRSL…LALA), 191-211 (AFLL…YTSL), 224-244 (ETLV…AWLM), and 255-275 (FVWY…AGVI).

The protein belongs to the UppP family.

It is found in the cell membrane. It catalyses the reaction di-trans,octa-cis-undecaprenyl diphosphate + H2O = di-trans,octa-cis-undecaprenyl phosphate + phosphate + H(+). Its function is as follows. Catalyzes the dephosphorylation of undecaprenyl diphosphate (UPP). Confers resistance to bacitracin. This Micrococcus luteus (strain ATCC 4698 / DSM 20030 / JCM 1464 / CCM 169 / CCUG 5858 / IAM 1056 / NBRC 3333 / NCIMB 9278 / NCTC 2665 / VKM Ac-2230) (Micrococcus lysodeikticus) protein is Undecaprenyl-diphosphatase.